A 517-amino-acid polypeptide reads, in one-letter code: uncharacterized protein (517 aa).

10 helical membrane passes run 35–55 (FSLIVLSFIVSFFLIVAIPGI), 81–101 (IAIYTLAALAFSFCMSVGVFN), 102–122 (IGISGQMMAGANFGFMMILKV), 135–155 (IITILLMILGSVTVAMVVAAL), 164–184 (VVSAIMLNWVIVLVSAYLVGT), 223–243 (LVIAIAAAIFIAVLMKFTVFG), 268–288 (FLSFVISGILSGLLAAVVYTA), 302–322 (FGITSVPITGFDGIAIGLIAL), 328–348 (IVIVSTIISFVTIGAKPAGLN), and 352–372 (ASLVLGIMMYFAAIYNLMIYI).

The protein resides in the cell membrane. This is an uncharacterized protein from Mycoplasma pneumoniae (strain ATCC 29342 / M129 / Subtype 1) (Mycoplasmoides pneumoniae).